Here is a 398-residue protein sequence, read N- to C-terminus: Alpha-(1,3)-fucosyltransferase 4 (398 aa).

The Cytoplasmic segment spans residues 1-15 (MRARWGRRGARRGGP). Residues 16–40 (GLPGTHLALLAASLLSSSVAIYVCW) traverse the membrane as a helical; Signal-anchor for type II membrane protein segment. Topologically, residues 41 to 398 (KQLPPLPWAS…VPNLAGWFQQ (358 aa)) are lumenal. N-linked (GlcNAc...) asparagine glycans are attached at residues asparagine 84, asparagine 183, and asparagine 311.

It belongs to the glycosyltransferase 10 family.

Its subcellular location is the golgi apparatus. The protein resides in the golgi stack membrane. It catalyses the reaction a beta-D-galactosyl-(1-&gt;4)-N-acetyl-beta-D-glucosaminyl derivative + GDP-beta-L-fucose = a beta-D-galactosyl-(1-&gt;4)-[alpha-L-fucosyl-(1-&gt;3)]-N-acetyl-beta-D-glucosaminyl derivative + GDP + H(+). The enzyme catalyses an N-acetyl-alpha-neuraminyl-(2-&gt;3)-beta-D-galactosyl-(1-&gt;4)-N-acetyl-beta-D-glucosaminyl derivative + GDP-beta-L-fucose = an alpha-Neu5Ac-(2-&gt;3)-beta-D-Gal-(1-&gt;4)-[alpha-L-Fuc-(1-&gt;3)]-beta-D-GlcNAc derivative + GDP + H(+). It carries out the reaction an alpha-Neu5Ac-(2-&gt;3)-beta-D-Gal-(1-&gt;4)-beta-D-GlcNAc-(1-&gt;3)-beta-D-Gal-(1-&gt;4)-beta-D-GlcNAc derivative + GDP-beta-L-fucose = an alpha-Neu5Ac-(2-&gt;3)-beta-D-Gal-(1-&gt;4)-beta-D-GlcNAc-(1-&gt;3)-beta-D-Gal-(1-&gt;4)-[alpha-L-Fuc-(1-&gt;3)]-beta-D-GlcNAc derivative + GDP + H(+). The catalysed reaction is an alpha-Neu5Ac-(2-&gt;3)-beta-D-Gal-(1-&gt;4)-beta-D-GlcNAc6S derivative + GDP-beta-L-fucose = an alpha-Neu5Ac-(2-&gt;3)-beta-D-Gal-(1-&gt;4)-[alpha-L-Fuc-(1-&gt;3)]-beta-D-GlcNAc6S derivative + GDP + H(+). The protein operates within protein modification; protein glycosylation. Functionally, catalyzes alpha(1-&gt;3) linkage of fucosyl moiety transferred from GDP-beta-L-fucose to N-acetyl glucosamine (GlcNAc) within type 2 lactosamine (LacNAc, Gal-beta(1-&gt;4)GlcNAc) glycan attached to N- or O-linked glycoproteins. Robustly fucosylates nonsialylated distal LacNAc unit of the polylactosamine chain to form Lewis X antigen (CD15), a glycan determinant known to mediate important cellular functions in development and immunity. Fucosylates with lower efficiency sialylated LacNAc acceptors to form sialyl Lewis X and 6-sulfo sialyl Lewis X determinants that serve as recognition epitopes for C-type lectins. Together with FUT7 contributes to SELE, SELL and SELP selectin ligand biosynthesis and selectin-dependent lymphocyte homing, leukocyte migration and blood leukocyte homeostasis. In a cell type specific manner, may also fucosylate the internal LacNAc unit of the polylactosamine chain to form VIM-2 antigen that serves as recognition epitope for SELE. The sequence is that of Alpha-(1,3)-fucosyltransferase 4 (FUT4) from Bos taurus (Bovine).